Consider the following 227-residue polypeptide: Protein FAM3C (227 aa).

Residues 1 to 24 (MRVAGAAKLVVAVAVFLLTFYVIS) form the signal peptide. Intrachain disulfides connect Cys58-Cys86 and Cys64-Cys221. One can recognise a GG-type lectin domain in the interval 67–225 (KHFAFKMASG…VEMEGCIPQK (159 aa)).

It belongs to the FAM3 family.

It localises to the secreted. The protein resides in the cytoplasmic vesicle. Its function is as follows. May be involved in retinal laminar formation. Promotes epithelial to mesenchymal transition. The protein is Protein FAM3C (FAM3C) of Bos taurus (Bovine).